A 164-amino-acid polypeptide reads, in one-letter code: Coenzyme Q-binding protein coq10, mitochondrial (164 aa).

The protein belongs to the COQ10 family. In terms of assembly, interacts with coenzyme Q.

Its subcellular location is the mitochondrion inner membrane. Required for the function of coenzyme Q in the respiratory chain. May serve as a chaperone or may be involved in the transport of Q6 from its site of synthesis to the catalytic sites of the respiratory complexes. The chain is Coenzyme Q-binding protein coq10, mitochondrial from Schizosaccharomyces pombe (strain 972 / ATCC 24843) (Fission yeast).